The sequence spans 220 residues: Iron-sulfur cluster repair protein YtfE (220 aa).

The protein belongs to the RIC family. YtfE subfamily. In terms of assembly, homodimer.

The protein resides in the cytoplasm. In terms of biological role, di-iron-containing protein involved in the repair of iron-sulfur clusters damaged by oxidative and nitrosative stress conditions. This chain is Iron-sulfur cluster repair protein YtfE, found in Shigella boydii serotype 4 (strain Sb227).